The following is a 218-amino-acid chain: Octanoyltransferase (218 aa).

A BPL/LPL catalytic domain is found at 31 to 206 (EETPDEVWLV…ELVNLLGYEQ (176 aa)). Residues 70–77 (RGGQVTYH), 137–139 (SLG), and 150–152 (GLA) each bind substrate. Cys168 functions as the Acyl-thioester intermediate in the catalytic mechanism.

Belongs to the LipB family.

It localises to the cytoplasm. The catalysed reaction is octanoyl-[ACP] + L-lysyl-[protein] = N(6)-octanoyl-L-lysyl-[protein] + holo-[ACP] + H(+). The protein operates within protein modification; protein lipoylation via endogenous pathway; protein N(6)-(lipoyl)lysine from octanoyl-[acyl-carrier-protein]: step 1/2. Catalyzes the transfer of endogenously produced octanoic acid from octanoyl-acyl-carrier-protein onto the lipoyl domains of lipoate-dependent enzymes. Lipoyl-ACP can also act as a substrate although octanoyl-ACP is likely to be the physiological substrate. This Vibrio vulnificus (strain CMCP6) protein is Octanoyltransferase.